A 181-amino-acid polypeptide reads, in one-letter code: Ras-like protein 1 (181 aa).

Residue 10 to 17 (GAGGVGKS) coordinates GTP. An Effector region motif is present at residues 32 to 40 (YDPTIEDSY). Residues 57–61 (DTAGQ) and 116–119 (NKCD) each bind GTP. Cys-178 carries the post-translational modification Cysteine methyl ester. Cys-178 carries S-geranylgeranyl cysteine lipidation. A propeptide spans 179 to 181 (KML) (removed in mature form).

This sequence belongs to the small GTPase superfamily. Ras family.

The protein localises to the cell membrane. It carries out the reaction GTP + H2O = GDP + phosphate + H(+). With respect to regulation, alternates between an inactive form bound to GDP and an active form bound to GTP. Activated by a guanine nucleotide-exchange factor (GEF) and inactivated by a GTPase-activating protein (GAP). Ras proteins bind GDP/GTP and possess intrinsic GTPase activity. Plays a role in eye development by regulating cell growth, survival of postmitotic ommatidial cells and differentiation of photoreceptor cells. During larval development, mediates Ptth/tor signaling leading to the production of ecdysone, a hormone required for the initiation of metamorphosis. In Drosophila mojavensis (Fruit fly), this protein is Ras-like protein 1.